The primary structure comprises 946 residues: Bifunctional glutamine synthetase adenylyltransferase/adenylyl-removing enzyme (946 aa).

The adenylyl removase stretch occupies residues 1 to 440; sequence MKPLSSPLQQ…VFNELIGDDE (440 aa). Residues 449–946 are adenylyl transferase; the sequence is SEQWRELWQD…ASWQKWLVEE (498 aa).

This sequence belongs to the GlnE family. It depends on Mg(2+) as a cofactor.

It carries out the reaction [glutamine synthetase]-O(4)-(5'-adenylyl)-L-tyrosine + phosphate = [glutamine synthetase]-L-tyrosine + ADP. The enzyme catalyses [glutamine synthetase]-L-tyrosine + ATP = [glutamine synthetase]-O(4)-(5'-adenylyl)-L-tyrosine + diphosphate. Its function is as follows. Involved in the regulation of glutamine synthetase GlnA, a key enzyme in the process to assimilate ammonia. When cellular nitrogen levels are high, the C-terminal adenylyl transferase (AT) inactivates GlnA by covalent transfer of an adenylyl group from ATP to specific tyrosine residue of GlnA, thus reducing its activity. Conversely, when nitrogen levels are low, the N-terminal adenylyl removase (AR) activates GlnA by removing the adenylyl group by phosphorolysis, increasing its activity. The regulatory region of GlnE binds the signal transduction protein PII (GlnB) which indicates the nitrogen status of the cell. This Escherichia coli (strain SE11) protein is Bifunctional glutamine synthetase adenylyltransferase/adenylyl-removing enzyme.